The following is an 827-amino-acid chain: Putative potassium transporter 12 (827 aa).

Residues 1 to 31 (MEEIEEGSSNNSIRRVGTGSSDRRWVDGSEV) are disordered. Residues 1 to 82 (MEEIEEGSSN…AGSHGHNLKD (82 aa)) lie on the Cytoplasmic side of the membrane. A helical transmembrane segment spans residues 83–103 (LSLLTTLGIAFQTLGVVYGDM). At 104–129 (GTSPLYVFSDVFSKVPIRSEVDVLGA) the chain is on the extracellular side. The chain crosses the membrane as a helical span at residues 130–150 (LSLVIYTIAVIPLAKYVFVVL). The Cytoplasmic portion of the chain corresponds to 151 to 216 (KANDNGEGGT…ALETKGYLKT (66 aa)). The chain crosses the membrane as a helical span at residues 217–237 (LLLLLVLMGTSMIIGDGILTP). At 238–253 (AMSVMSAMSGLQGEVK) the chain is on the extracellular side. The helical transmembrane segment at 254 to 274 (GFGTNALVMSSIVILVALFSI) threads the bilayer. The Cytoplasmic portion of the chain corresponds to 275–281 (QRFGTGK). Residues 282–302 (VGFLFAPVLALWFFSLGAIGI) form a helical membrane-spanning segment. Topologically, residues 303–335 (YNLLKYDFTVIRALNPFYIVLFFNKNSKQAWSA) are extracellular. The chain crosses the membrane as a helical span at residues 336 to 356 (LGGCVLCITGAEAMFADLGHF). The Cytoplasmic segment spans residues 357 to 363 (SVRSIQM). The chain crosses the membrane as a helical span at residues 364 to 384 (AFTCVVFPCLLLAYMGQAAYL). Residues 385–402 (TKHPEASARIFYDSVPKS) are Extracellular-facing. The helical transmembrane segment at 403–423 (LFWPVFVIATLAAMIASQAMI) threads the bilayer. Residues 424 to 454 (SATFSCVKQAMALGCFPRLKIIHTSKKRIGQ) lie on the Cytoplasmic side of the membrane. The chain crosses the membrane as a helical span at residues 455-475 (IYIPVINWFLMIMCILVVSIF). Residues 476–480 (RSTTH) lie on the Extracellular side of the membrane. 2 consecutive transmembrane segments (helical) span residues 481–501 (IANA…VLVT) and 502–522 (LVML…PLIF). At 523 to 536 (GSVETIYLLAVLTK) the chain is on the extracellular side. Residues 537–557 (ILEGGWVPLVFATFFLTVMYI) traverse the membrane as a helical segment. The Cytoplasmic segment spans residues 558-827 (WNYGSVLKYQ…ILQAGMTYMV (270 aa)). The interval 728–750 (RSEPEQELDSEVLPSSSVGSSME) is disordered. Low complexity predominate over residues 738–748 (EVLPSSSVGSS).

It belongs to the HAK/KUP transporter (TC 2.A.72.3) family.

Its subcellular location is the cell membrane. Its function is as follows. Putative potassium transporter. The polypeptide is Putative potassium transporter 12 (POT12) (Arabidopsis thaliana (Mouse-ear cress)).